Consider the following 29-residue polypeptide: Augerpeptide hheTx2 (29 aa).

In terms of processing, contains 4 disulfide bonds. Expressed by the venom duct.

It localises to the secreted. The protein is Augerpeptide hheTx2 of Hastula hectica (Sea snail).